A 140-amino-acid chain; its full sequence is Ergosterol biosynthetic protein 28 homolog (140 aa).

4 consecutive transmembrane segments (helical) span residues 4-24 (FLNV…GNTL), 52-72 (TFGI…IDIH), 79-99 (ITLW…FVYG), and 105-125 (IGVL…LVGL).

It belongs to the ERG28 family. As to expression, ubiquitous; strongly expressed in testis and some cancer cell lines.

Its subcellular location is the endoplasmic reticulum membrane. The protein is Ergosterol biosynthetic protein 28 homolog of Homo sapiens (Human).